Consider the following 129-residue polypeptide: Lysozyme C-3 (129 aa).

Positions 1–129 (KVYERCELAA…VSRWIRGCRL (129 aa)) constitute a C-type lysozyme domain. 4 cysteine pairs are disulfide-bonded: Cys6-Cys127, Cys30-Cys115, Cys64-Cys80, and Cys76-Cys94. Catalysis depends on residues Glu35 and Asp52.

It belongs to the glycosyl hydrolase 22 family.

It localises to the secreted. It carries out the reaction Hydrolysis of (1-&gt;4)-beta-linkages between N-acetylmuramic acid and N-acetyl-D-glucosamine residues in a peptidoglycan and between N-acetyl-D-glucosamine residues in chitodextrins.. Its function is as follows. Lysozymes have primarily a bacteriolytic function; those in tissues and body fluids are associated with the monocyte-macrophage system and enhance the activity of immunoagents. The protein is Lysozyme C-3 of Anas platyrhynchos (Mallard).